The chain runs to 184 residues: Transmembrane protein 140 (184 aa).

The Cytoplasmic portion of the chain corresponds to methionine 1–serine 12. Residues phenylalanine 13 to tryptophan 33 form a helical membrane-spanning segment. The Extracellular portion of the chain corresponds to lysine 34–arginine 83. Asparagine 37 is a glycosylation site (N-linked (GlcNAc...) asparagine). The chain crosses the membrane as a helical span at residues leucine 84–glutamine 104. The Cytoplasmic segment spans residues cysteine 105 to glycine 117. A helical transmembrane segment spans residues phenylalanine 118–tryptophan 138. At lysine 139 to glycine 149 the chain is on the extracellular side. Residues phenylalanine 150–phenylalanine 170 form a helical membrane-spanning segment. Topologically, residues proline 171–cysteine 184 are cytoplasmic.

The protein localises to the membrane. This Rattus norvegicus (Rat) protein is Transmembrane protein 140 (Tmem140).